The sequence spans 200 residues: Small ribosomal subunit protein uS4 (200 aa).

Positions 22 to 42 (TGKELEKRPYAPGPHGPGQRK) are disordered. One can recognise an S4 RNA-binding domain in the interval 92–155 (ARLDNVVYKL…RNLSIIKESV (64 aa)).

The protein belongs to the universal ribosomal protein uS4 family. As to quaternary structure, part of the 30S ribosomal subunit. Contacts protein S5. The interaction surface between S4 and S5 is involved in control of translational fidelity.

Its function is as follows. One of the primary rRNA binding proteins, it binds directly to 16S rRNA where it nucleates assembly of the body of the 30S subunit. With S5 and S12 plays an important role in translational accuracy. This is Small ribosomal subunit protein uS4 from Bacillus velezensis (strain DSM 23117 / BGSC 10A6 / LMG 26770 / FZB42) (Bacillus amyloliquefaciens subsp. plantarum).